A 378-amino-acid polypeptide reads, in one-letter code: UDP-4-amino-4-deoxy-L-arabinose--oxoglutarate aminotransferase (378 aa).

N6-(pyridoxal phosphate)lysine is present on Lys-182.

The protein belongs to the DegT/DnrJ/EryC1 family. ArnB subfamily. In terms of assembly, homodimer. Pyridoxal 5'-phosphate is required as a cofactor.

The enzyme catalyses UDP-4-amino-4-deoxy-beta-L-arabinose + 2-oxoglutarate = UDP-beta-L-threo-pentopyranos-4-ulose + L-glutamate. Its pathway is nucleotide-sugar biosynthesis; UDP-4-deoxy-4-formamido-beta-L-arabinose biosynthesis; UDP-4-deoxy-4-formamido-beta-L-arabinose from UDP-alpha-D-glucuronate: step 2/3. It functions in the pathway bacterial outer membrane biogenesis; lipopolysaccharide biosynthesis. Functionally, catalyzes the conversion of UDP-4-keto-arabinose (UDP-Ara4O) to UDP-4-amino-4-deoxy-L-arabinose (UDP-L-Ara4N). The modified arabinose is attached to lipid A and is required for resistance to polymyxin and cationic antimicrobial peptides. In Aeromonas salmonicida (strain A449), this protein is UDP-4-amino-4-deoxy-L-arabinose--oxoglutarate aminotransferase.